Reading from the N-terminus, the 149-residue chain is uncharacterized protein (149 aa).

Helical transmembrane passes span Val-39–Gly-61, Val-82–Leu-104, and Trp-119–Leu-141.

It to M.pneumoniae MPN_090.

The protein localises to the cell membrane. This is an uncharacterized protein from Mycoplasma pneumoniae (strain ATCC 29342 / M129 / Subtype 1) (Mycoplasmoides pneumoniae).